The sequence spans 222 residues: Cytidylate kinase (222 aa).

10-18 (GPAGAGKST) provides a ligand contact to ATP.

It belongs to the cytidylate kinase family. Type 1 subfamily.

The protein localises to the cytoplasm. The enzyme catalyses CMP + ATP = CDP + ADP. It carries out the reaction dCMP + ATP = dCDP + ADP. This Halalkalibacterium halodurans (strain ATCC BAA-125 / DSM 18197 / FERM 7344 / JCM 9153 / C-125) (Bacillus halodurans) protein is Cytidylate kinase.